The primary structure comprises 125 residues: Glycine cleavage system H protein (125 aa).

The region spanning 22–104 (SYVIGITDFA…YDTGWILKLE (83 aa)) is the Lipoyl-binding domain. Lys63 is modified (N6-lipoyllysine).

The protein belongs to the GcvH family. In terms of assembly, the glycine cleavage system is composed of four proteins: P, T, L and H. Requires (R)-lipoate as cofactor.

Its function is as follows. The glycine cleavage system catalyzes the degradation of glycine. The H protein shuttles the methylamine group of glycine from the P protein to the T protein. In terms of biological role, is also involved in protein lipoylation via its role as an octanoyl/lipoyl carrier protein intermediate. In Listeria monocytogenes serotype 4a (strain HCC23), this protein is Glycine cleavage system H protein.